A 299-amino-acid chain; its full sequence is MATH domain and coiled-coil domain-containing protein At2g42460 (299 aa).

In terms of domain architecture, MATH spans 7-130 (QKTFTWKIEN…NNTLFIEVYI (124 aa)). Residues 225 to 262 (FRVKWLKSKLDEISLARKKKVDADAARVQELEGKVKNQ) adopt a coiled-coil conformation.

In Arabidopsis thaliana (Mouse-ear cress), this protein is MATH domain and coiled-coil domain-containing protein At2g42460.